A 242-amino-acid chain; its full sequence is Protein FsrB (242 aa).

5 helical membrane passes run 29–49 (LTVY…SVLF), 52–72 (LSET…AGGW), 78–95 (WLCR…PFVL), 100–120 (VSLP…LFYW), and 160–180 (KIAS…LPVT).

This sequence belongs to the AgrB family.

The protein resides in the cell membrane. In terms of biological role, may be involved in the proteolytic processing of a quorum sensing system signal molecule precursor required for the regulation of the virulence genes for gelatinase (gelE) and a serine protease (sprE). This Enterococcus faecalis (strain ATCC 47077 / OG1RF) protein is Protein FsrB (fsrB).